Consider the following 115-residue polypeptide: uncharacterized protein (115 aa).

The signal sequence occupies residues 1 to 26 (MNFKKTVVSALSISALALSVSGVASA). In terms of domain architecture, BIG2 spans 36-114 (VKNISISPTH…AVFGKVYVTV (79 aa)).

This is an uncharacterized protein from Bacillus subtilis (strain 168).